Consider the following 493-residue polypeptide: Glutathione hydrolase 6 (493 aa).

Residues 1 to 54 are Cytoplasmic-facing; the sequence is MERAEEPVVYQKLLPWEPSLESEEEVEEEETSEALVLNPRRHQDSSRNKAGGLP. Positions 19 to 52 are disordered; sequence SLESEEEVEEEETSEALVLNPRRHQDSSRNKAGG. A compositionally biased stretch (acidic residues) spans 20–32; sequence LESEEEVEEEETS. The helical; Signal-anchor for type II membrane protein transmembrane segment at 55-75 threads the bilayer; that stretch reads GTWARVVAALLLLAVGCSLAV. Residues 76-493 are Extracellular-facing; the sequence is RQLQNQGRST…PHACCPFQGF (418 aa). A disordered region spans residues 83–105; that stretch reads RSTGSLGSVAPPPGGHSHGPGVY. N161 and N370 each carry an N-linked (GlcNAc...) asparagine glycan. Low complexity predominate over residues 442–455; that stretch reads PPTQAQHQHQGQQE. The segment at 442-464 is disordered; that stretch reads PPTQAQHQHQGQQEPTEHPSTCG.

The protein belongs to the gamma-glutamyltransferase family. Heterodimer composed of the light and heavy chains. The active site is located in the light chain. Post-translationally, cleaved by autocatalysis into a large and a small subunit and the autocatalytic cleavage is essential to the functional activation of the enzyme.

The protein localises to the membrane. It carries out the reaction an N-terminal (5-L-glutamyl)-[peptide] + an alpha-amino acid = 5-L-glutamyl amino acid + an N-terminal L-alpha-aminoacyl-[peptide]. The enzyme catalyses glutathione + H2O = L-cysteinylglycine + L-glutamate. The catalysed reaction is an S-substituted glutathione + H2O = an S-substituted L-cysteinylglycine + L-glutamate. The protein operates within sulfur metabolism; glutathione metabolism. In terms of biological role, hydrolyzes and transfers gamma-glutamyl moieties from glutathione and other gamma-glutamyl compounds to acceptors. This Homo sapiens (Human) protein is Glutathione hydrolase 6.